Here is a 62-residue protein sequence, read N- to C-terminus: Snaclec aspercetin subunit alpha (62 aa).

Cys2 and Cys13 form a disulfide bridge. A C-type lectin domain is found at 9–62; it reads YEGHCYRFFHPPKDWADAERFCTEQAKGGALVSIQRFGEEDFVSNLITKNLQRG.

Belongs to the snaclec family. Heterodimer; disulfide-linked. In terms of tissue distribution, expressed by the venom gland.

The protein resides in the secreted. Functionally, snaclec that binds to von Willebrand factor (VWF) and induces its interaction with GPIbalpha (GP1BA) (via the vWF A1 domain), resulting in platelet aggregation. Intravenous injection in mice induces a dose-dependent drop in platelet count (thrombocytopenia). Pretreatment by intravenous injection by this protein in mice potentiates the hemorrhagic lesion in the skin provoked by the metalloproteinase BaP1 intradermally injected. This result is not observed when both BaP1 and this protein are injected simultaneously. The polypeptide is Snaclec aspercetin subunit alpha (Bothrops asper (Terciopelo)).